A 121-amino-acid polypeptide reads, in one-letter code: Large ribosomal subunit protein uL14c (121 aa).

Belongs to the universal ribosomal protein uL14 family. Part of the 50S ribosomal subunit.

The protein resides in the plastid. It localises to the apicoplast. In terms of biological role, binds to 23S rRNA. The sequence is that of Large ribosomal subunit protein uL14c (rpl14) from Eimeria tenella (Coccidian parasite).